A 147-amino-acid chain; its full sequence is UPF0306 protein YhbP (147 aa).

It belongs to the UPF0306 family.

This Escherichia fergusonii (strain ATCC 35469 / DSM 13698 / CCUG 18766 / IAM 14443 / JCM 21226 / LMG 7866 / NBRC 102419 / NCTC 12128 / CDC 0568-73) protein is UPF0306 protein YhbP.